We begin with the raw amino-acid sequence, 265 residues long: Transcription factor BHLH089 (265 aa).

The disordered stretch occupies residues 1–132; it reads MDPAPTLAAE…PPPPEPPKQD (132 aa). 2 stretches are compositionally biased toward gly residues: residues 17–29 and 44–53; these read LGGG…GGRG and SRGGGGGGGA. Over residues 95–105 the composition is skewed to polar residues; that stretch reads SKSSGDNSSLR. The tract at residues 142-155 is basic motif; degenerate; the sequence is QATDSHSLAERARR. One can recognise a bHLH domain in the interval 142–192; it reads QATDSHSLAERARREKISERMKILQDLVPGCNKVIGKASVLDEIINYIQAL. Positions 156–192 are helix-loop-helix motif; it reads EKISERMKILQDLVPGCNKVIGKASVLDEIINYIQAL.

Belongs to the bHLH protein family. Interacts with RSS3.

The protein resides in the nucleus. Its function is as follows. Transcription factor that may regulate jasmonate-regulated genes. The sequence is that of Transcription factor BHLH089 from Oryza sativa subsp. japonica (Rice).